A 294-amino-acid chain; its full sequence is Nucleotide-binding protein CA_C0511 (294 aa).

Residue 8–15 (GLSGAGKT) participates in ATP binding. Position 59-62 (59-62 (DIRG)) interacts with GTP.

It belongs to the RapZ-like family.

Functionally, displays ATPase and GTPase activities. This is Nucleotide-binding protein CA_C0511 from Clostridium acetobutylicum (strain ATCC 824 / DSM 792 / JCM 1419 / IAM 19013 / LMG 5710 / NBRC 13948 / NRRL B-527 / VKM B-1787 / 2291 / W).